The chain runs to 728 residues: Catalase-peroxidase 1 (728 aa).

The signal sequence occupies residues 1–16 (MDKAQHTQGKCPVAHG). The segment at residues 97–225 (WHSAGTYRMA…LAAVMMGLIY (129 aa)) is a cross-link (tryptophyl-tyrosyl-methioninium (Trp-Tyr) (with M-251)). Catalysis depends on histidine 98, which acts as the Proton acceptor. The segment at residues 225–251 (YVNPEGVDGQPDPLKTAQDIRVTFERM) is a cross-link (tryptophyl-tyrosyl-methioninium (Tyr-Met) (with W-97)). Histidine 266 provides a ligand contact to heme b.

The protein belongs to the peroxidase family. Peroxidase/catalase subfamily. Homodimer or homotetramer. The cofactor is heme b. Formation of the three residue Trp-Tyr-Met cross-link is important for the catalase, but not the peroxidase activity of the enzyme.

It catalyses the reaction H2O2 + AH2 = A + 2 H2O. The enzyme catalyses 2 H2O2 = O2 + 2 H2O. Its function is as follows. Bifunctional enzyme with both catalase and broad-spectrum peroxidase activity. In Shewanella frigidimarina (strain NCIMB 400), this protein is Catalase-peroxidase 1.